Reading from the N-terminus, the 236-residue chain is Leucyl/phenylalanyl-tRNA--protein transferase (236 aa).

This sequence belongs to the L/F-transferase family.

Its subcellular location is the cytoplasm. The enzyme catalyses N-terminal L-lysyl-[protein] + L-leucyl-tRNA(Leu) = N-terminal L-leucyl-L-lysyl-[protein] + tRNA(Leu) + H(+). It catalyses the reaction N-terminal L-arginyl-[protein] + L-leucyl-tRNA(Leu) = N-terminal L-leucyl-L-arginyl-[protein] + tRNA(Leu) + H(+). The catalysed reaction is L-phenylalanyl-tRNA(Phe) + an N-terminal L-alpha-aminoacyl-[protein] = an N-terminal L-phenylalanyl-L-alpha-aminoacyl-[protein] + tRNA(Phe). Functions in the N-end rule pathway of protein degradation where it conjugates Leu, Phe and, less efficiently, Met from aminoacyl-tRNAs to the N-termini of proteins containing an N-terminal arginine or lysine. This is Leucyl/phenylalanyl-tRNA--protein transferase from Yersinia pseudotuberculosis serotype O:1b (strain IP 31758).